We begin with the raw amino-acid sequence, 310 residues long: tRNA uridine(34) hydroxylase (310 aa).

A Rhodanese domain is found at 127-225 (KDKNTIVVDT…YLEDMSKEES (99 aa)). C185 (cysteine persulfide intermediate) is an active-site residue.

Belongs to the TrhO family.

The catalysed reaction is uridine(34) in tRNA + AH2 + O2 = 5-hydroxyuridine(34) in tRNA + A + H2O. Its function is as follows. Catalyzes oxygen-dependent 5-hydroxyuridine (ho5U) modification at position 34 in tRNAs. This chain is tRNA uridine(34) hydroxylase, found in Prochlorococcus marinus subsp. pastoris (strain CCMP1986 / NIES-2087 / MED4).